Reading from the N-terminus, the 292-residue chain is Elongation factor Ts (292 aa).

An involved in Mg(2+) ion dislocation from EF-Tu region spans residues 79-82 (TDFV).

Belongs to the EF-Ts family.

The protein resides in the cytoplasm. Associates with the EF-Tu.GDP complex and induces the exchange of GDP to GTP. It remains bound to the aminoacyl-tRNA.EF-Tu.GTP complex up to the GTP hydrolysis stage on the ribosome. This chain is Elongation factor Ts, found in Xanthomonas campestris pv. campestris (strain B100).